The primary structure comprises 356 residues: tRNA-specific 2-thiouridylase MnmA 1 (356 aa).

ATP is bound by residues 8-15 (GMSGGVDS) and Met34. Catalysis depends on Cys103, which acts as the Nucleophile. Residues Cys103 and Cys199 are joined by a disulfide bond. ATP is bound at residue Gly127. The interaction with tRNA stretch occupies residues 149-151 (KDQ). The Cysteine persulfide intermediate role is filled by Cys199. An interaction with tRNA region spans residues 305-306 (RY).

The protein belongs to the MnmA/TRMU family.

It localises to the cytoplasm. The catalysed reaction is S-sulfanyl-L-cysteinyl-[protein] + uridine(34) in tRNA + AH2 + ATP = 2-thiouridine(34) in tRNA + L-cysteinyl-[protein] + A + AMP + diphosphate + H(+). Catalyzes the 2-thiolation of uridine at the wobble position (U34) of tRNA, leading to the formation of s(2)U34. This Clostridium botulinum (strain ATCC 19397 / Type A) protein is tRNA-specific 2-thiouridylase MnmA 1.